Consider the following 304-residue polypeptide: tRNA-uridine aminocarboxypropyltransferase 1 (304 aa).

Residues 1–30 (MALSPSVVPQESEENNANCVETKQSQTAST) form a disordered region. Positions 15-30 (NNANCVETKQSQTAST) are enriched in polar residues. Positions 206 to 209 (DSTW) match the DXTW motif.

It belongs to the TDD superfamily. DTWD1 family.

The protein localises to the nucleus. The enzyme catalyses a uridine in tRNA + S-adenosyl-L-methionine = a 3-[(3S)-3-amino-3-carboxypropyl]uridine in tRNA + S-methyl-5'-thioadenosine + H(+). Catalyzes the formation of 3-(3-amino-3-carboxypropyl)uridine (acp3U) at position 20 in the D-loop of several cytoplasmic tRNAs (acp3U(20)). In Rattus norvegicus (Rat), this protein is tRNA-uridine aminocarboxypropyltransferase 1.